The sequence spans 207 residues: MTNSKQKLVLASGSPRRLELLHQIGIEPARLMPMDIDETPVKLEHPRTLCRRLSQQKAEAAQAALKSEQAWKDAYVLGSDTVVAVGRRIVGKAEYTEEASAALHLLSGRSHWVYTGICLVTPDGKIRQKVAETKVRFKRLSTREIDAYIASGQWRGKAGAYGIQGIAGAFVQKLTGSYTNVVGLPLYETMSLLSGEGFEVTSGWLEG.

Residue D80 is the Proton acceptor of the active site.

The protein belongs to the Maf family. YhdE subfamily. A divalent metal cation serves as cofactor.

The protein resides in the cytoplasm. It carries out the reaction dTTP + H2O = dTMP + diphosphate + H(+). The enzyme catalyses UTP + H2O = UMP + diphosphate + H(+). Its function is as follows. Nucleoside triphosphate pyrophosphatase that hydrolyzes dTTP and UTP. May have a dual role in cell division arrest and in preventing the incorporation of modified nucleotides into cellular nucleic acids. This Agrobacterium fabrum (strain C58 / ATCC 33970) (Agrobacterium tumefaciens (strain C58)) protein is dTTP/UTP pyrophosphatase (maf1).